The following is a 316-amino-acid chain: Transaldolase (316 aa).

Lysine 131 acts as the Schiff-base intermediate with substrate in catalysis.

Belongs to the transaldolase family. Type 1 subfamily. In terms of assembly, homodimer.

It is found in the cytoplasm. The catalysed reaction is D-sedoheptulose 7-phosphate + D-glyceraldehyde 3-phosphate = D-erythrose 4-phosphate + beta-D-fructose 6-phosphate. The protein operates within carbohydrate degradation; pentose phosphate pathway; D-glyceraldehyde 3-phosphate and beta-D-fructose 6-phosphate from D-ribose 5-phosphate and D-xylulose 5-phosphate (non-oxidative stage): step 2/3. In terms of biological role, transaldolase is important for the balance of metabolites in the pentose-phosphate pathway. The chain is Transaldolase from Chromohalobacter salexigens (strain ATCC BAA-138 / DSM 3043 / CIP 106854 / NCIMB 13768 / 1H11).